A 113-amino-acid polypeptide reads, in one-letter code: Transcription initiation factor IIA subunit 2 (113 aa).

The protein belongs to the TFIIA subunit 2 family. As to quaternary structure, TFIIA is a heterodimer of the large unprocessed subunit 1 and a small subunit gamma. It was originally believed to be a heterotrimer of an alpha, a beta and a gamma subunit.

The protein resides in the nucleus. Functionally, TFIIA is a component of the transcription machinery of RNA polymerase II and plays an important role in transcriptional activation. TFIIA in a complex with TBP mediates transcriptional activity. This chain is Transcription initiation factor IIA subunit 2, found in Caenorhabditis elegans.